The chain runs to 148 residues: MVXWTDXERAAITSLWGKIDVGEIGPQALARLLIVYPWTQRHFSTFGNLSTNAAILGNPKVAAHGKTVMGGLELAVKNMDNIKGAYANLSKMHSEKIHVDPDNFRLLAEITTICLAAKFGPSVFTPDFQEAWQKFENAVVSALGRQYH.

The region spanning 3–148 (XWTDXERAAI…VVSALGRQYH (146 aa)) is the Globin domain. Residues His-64 and His-93 each contribute to the heme b site.

This sequence belongs to the globin family. As to quaternary structure, heterotetramer of two alpha chains and two beta chains. As to expression, red blood cells.

Involved in oxygen transport from gills to the various peripheral tissues. The chain is Hemoglobin subunit beta (hbb) from Decapterus maruadsi (Japanese scad).